A 32-amino-acid chain; its full sequence is Photosystem II reaction center protein T (32 aa).

Methionine 1 is modified (N-formylmethionine). At 1 to 2 (ME) the chain is on the lumenal side. Residues 3 to 23 (TITYVFIFACIIALFFFAIFF) traverse the membrane as a helical segment. Over 24-32 (REPPRITKK) the chain is Cytoplasmic.

It belongs to the PsbT family. In terms of assembly, PSII is composed of 1 copy each of membrane proteins PsbA, PsbB, PsbC, PsbD, PsbE, PsbF, PsbH, PsbI, PsbJ, PsbK, PsbL, PsbM, PsbT, PsbX, PsbY, PsbZ, Psb30/Ycf12, PsbO, CyanoQ (PsbQ), PsbU, PsbV and a large number of cofactors. It forms dimeric complexes. Part of a photosystem II (PSII) assembly intermediate complex PSII-I; crystallized from a strain deleted of psbJ, it forms monomeric PSII before addition of the oxygen evolving complex. PSII-I includes 3 assembly factors not found in mature PSII (Psb27, Psb28 and Psb34). It depends on PSII binds multiple chlorophylls, carotenoids and specific lipids. as a cofactor.

The protein resides in the cellular thylakoid membrane. In terms of biological role, found at the monomer-monomer interface of the photosystem II (PS II) dimer, plays a role in assembly and dimerization of PSII. PSII is a light-driven water plastoquinone oxidoreductase, using light energy to abstract electrons from H(2)O, generating a proton gradient subsequently used for ATP formation. The polypeptide is Photosystem II reaction center protein T (Thermosynechococcus vestitus (strain NIES-2133 / IAM M-273 / BP-1)).